We begin with the raw amino-acid sequence, 350 residues long: Protein RecA (350 aa).

67–74 (GPESSGKT) provides a ligand contact to ATP.

This sequence belongs to the RecA family.

Its subcellular location is the cytoplasm. Functionally, can catalyze the hydrolysis of ATP in the presence of single-stranded DNA, the ATP-dependent uptake of single-stranded DNA by duplex DNA, and the ATP-dependent hybridization of homologous single-stranded DNAs. It interacts with LexA causing its activation and leading to its autocatalytic cleavage. The polypeptide is Protein RecA (Wolinella succinogenes (strain ATCC 29543 / DSM 1740 / CCUG 13145 / JCM 31913 / LMG 7466 / NCTC 11488 / FDC 602W) (Vibrio succinogenes)).